The following is a 444-amino-acid chain: Sonic hedgehog protein (444 aa).

Residues 1–24 (MLVATQSLLLLSFICTLVTPPGLA) form the signal peptide. C25 carries N-palmitoyl cysteine lipidation. The Cardin-Weintraub signature appears at 33-39 (KRRHPKK). The Ca(2+) site is built by E90, E91, D96, T126, E127, D130, and D132. The Zn(2+) site is built by H141, D148, and H183. G198 is lipidated: Cholesterol glycine ester. 3 consecutive repeat copies span residues 386-393 (QVDLQSHH), 394-401 (QVDLQSHH), and 403-409 (VDLQSHH). A 3 X 8 AA tandem repeats of Q-V-D-L-Q-S-H-H region spans residues 386-409 (QVDLQSHHQVDLQSHHQVDLQSHH).

This sequence belongs to the hedgehog family. As to quaternary structure, interacts with HHATL/GUP1 which negatively regulates HHAT-mediated palmitoylation of the SHH N-terminus. Interacts with BOC and CDON. Interacts with HHIP. Interacts with DISP1 via its cholesterol anchor. Interacts with SCUBE2. Multimer. In terms of processing, the C-terminal domain displays an autoproteolysis activity and a cholesterol transferase activity. Both activities result in the cleavage of the full-length protein and covalent attachment of a cholesterol moiety to the C-terminal of the newly generated N-terminal fragment (ShhN). Cholesterylation is required for the sonic hedgehog protein N-product targeting to lipid rafts and multimerization. ShhN is the active species in both local and long-range signaling, whereas the C-product (ShhC) is degraded in the reticulum endoplasmic. Post-translationally, N-palmitoylation by HHAT of ShhN is required for sonic hedgehog protein N-product multimerization and full activity. It is a prerequisite for the membrane-proximal positioning and the subsequent shedding of this N-terminal peptide. The lipidated N- and C-terminal peptides of ShhNp can be cleaved (shedding). The N-terminal palmitoylated peptide is cleaved at the Cardin-Weintraub (CW) motif site. The cleavage reduced the interactions with heparan sulfate. The cleavage is enhanced by SCUBE2. As to expression, strongly expressed in notochord and neural floor plate during embryogenesis. In tadpole, high expression is observed in pancreas/stomach, moderate expression in tail, and low expression in intestine, brain, and hind limb.

The protein localises to the endoplasmic reticulum membrane. Its subcellular location is the golgi apparatus membrane. It localises to the cell membrane. It catalyses the reaction glycyl-L-cysteinyl-[protein] + cholesterol + H(+) = [protein]-C-terminal glycyl cholesterol ester + N-terminal L-cysteinyl-[protein]. Functionally, the C-terminal part of the sonic hedgehog protein precursor displays an autoproteolysis and a cholesterol transferase activity. Both activities result in the cleavage of the full-length protein into two parts (ShhN and ShhC) followed by the covalent attachment of a cholesterol moiety to the C-terminal of the newly generated ShhN. Both activities occur in the endoplasmic reticulum. Once cleaved, ShhC is degraded in the endoplasmic reticulum. Its function is as follows. The dually lipidated sonic hedgehog protein N-product (ShhNp) is a morphogen which is essential for a variety of patterning events during development. Induces ventral cell fate in the neural tube and somites. Involved in the patterning of the anterior-posterior axis of the developing limb bud. Essential for axon guidance. Binds to the patched (PTCH1) receptor, which functions in association with smoothened (SMO), to activate the transcription of target genes. In the absence of SHH, PTCH1 represses the constitutive signaling activity of SMO. The chain is Sonic hedgehog protein from Xenopus laevis (African clawed frog).